A 205-amino-acid polypeptide reads, in one-letter code: Small ribosomal subunit protein uS4 (205 aa).

The disordered stretch occupies residues L27–S46. In terms of domain architecture, S4 RNA-binding spans H118–T178.

Belongs to the universal ribosomal protein uS4 family. As to quaternary structure, part of the 30S ribosomal subunit. Contacts protein S5. The interaction surface between S4 and S5 is involved in control of translational fidelity.

In terms of biological role, one of the primary rRNA binding proteins, it binds directly to 16S rRNA where it nucleates assembly of the body of the 30S subunit. Its function is as follows. With S5 and S12 plays an important role in translational accuracy. The chain is Small ribosomal subunit protein uS4 from Granulibacter bethesdensis (strain ATCC BAA-1260 / CGDNIH1).